The following is a 246-amino-acid chain: Neuromodulin (246 aa).

A disordered region spans residues 1–246 (MLCCMRRTKQ…EESKADQENA (246 aa)). Residues C3 and C4 are each lipidated (S-palmitoyl cysteine). Over residues 9–33 (KQVEKNEDGDQKIEQDGIKPEDKAH) the composition is skewed to basic and acidic residues. One can recognise an IQ domain in the interval 32-61 (AHKAATKIQASFRGHITRKKLKGEKKADAP). Composition is skewed to low complexity over residues 87–99 (ASAATEASAADSA) and 125–157 (SEQPAPQAATPAASSEEKPAAAAETESATKAST). Basic and acidic residues predominate over residues 164–176 (KADEAQDKEEPKQ). Low complexity predominate over residues 177-203 (ADVPAADTTATTTPAAEDATAKATAQP). Composition is skewed to basic and acidic residues over residues 213–225 (TEEKTDAVEETKP) and 237–246 (EESKADQENA).

This sequence belongs to the neuromodulin family. As to quaternary structure, binds calmodulin with a greater affinity in the absence of Ca(2+) than in its presence. Palmitoylated. Palmitoylation is essential for plasma membrane association. In terms of tissue distribution, expressed in neurons.

The protein localises to the cell membrane. It is found in the cell projection. Its subcellular location is the growth cone membrane. The protein resides in the synapse. It localises to the filopodium membrane. Functionally, this protein is associated with nerve growth. It is a major component of the motile 'growth cones' that form the tips of elongating axons. Plays a role in axonal and dendritic filopodia induction. This chain is Neuromodulin (GAP43), found in Gallus gallus (Chicken).